The sequence spans 69 residues: Guanine nucleotide-binding protein G(I)/G(S)/G(O) subunit gamma-T2 (69 aa).

Cysteine methyl ester is present on cysteine 66. A lipid anchor (S-farnesyl cysteine) is attached at cysteine 66. A propeptide spans 67 to 69 (VLS) (removed in mature form).

Belongs to the G protein gamma family. In terms of assembly, g proteins are composed of 3 units, alpha, beta and gamma.

It localises to the cell membrane. Its function is as follows. Guanine nucleotide-binding proteins (G proteins) are involved as a modulator or transducer in various transmembrane signaling systems. The beta and gamma chains are required for the GTPase activity, for replacement of GDP by GTP, and for G protein-effector interaction. This is Guanine nucleotide-binding protein G(I)/G(S)/G(O) subunit gamma-T2 (Gngt2) from Mus musculus (Mouse).